Reading from the N-terminus, the 1006-residue chain is Probable beta-galactosidase A (1006 aa).

The N-terminal stretch at 1 to 18 (MKLLSVCAIALLAAQAAG) is a signal peptide. Residues Y96, N140, A141, and E142 each coordinate substrate. N156 is a glycosylation site (N-linked (GlcNAc...) asparagine). N199 is a binding site for substrate. The active-site Proton donor is E200. Cysteines 205 and 206 form a disulfide. Y260 contributes to the substrate binding site. A disulfide bridge connects residues C266 and C315. E298 acts as the Nucleophile in catalysis. Y364 lines the substrate pocket. N-linked (GlcNAc...) asparagine glycosylation is found at N373, N402, N422, N622, N760, N777, and N914.

It belongs to the glycosyl hydrolase 35 family.

Its subcellular location is the secreted. The enzyme catalyses Hydrolysis of terminal non-reducing beta-D-galactose residues in beta-D-galactosides.. Cleaves beta-linked terminal galactosyl residues from gangliosides, glycoproteins, and glycosaminoglycans. This chain is Probable beta-galactosidase A (lacA), found in Aspergillus fumigatus (strain CBS 144.89 / FGSC A1163 / CEA10) (Neosartorya fumigata).